Consider the following 139-residue polypeptide: Plastocyanin (139 aa).

The first 34 residues, 1–34 (MKLISASLRRFSLAVLTILLVVSSFAVFTPSASA), serve as a signal peptide directing secretion. The Plastocyanin-like domain occupies 35–139 (ETYQVKLGTD…GMVGTITVQG (105 aa)). Cu cation contacts are provided by H73, C123, H126, and M131.

The protein belongs to the plastocyanin family. The cofactor is Cu(2+).

It localises to the cellular thylakoid membrane. Participates in electron transfer between P700 and the cytochrome b6-f complex in photosystem I. The chain is Plastocyanin from Nostoc punctiforme (strain ATCC 29133 / PCC 73102).